The chain runs to 117 residues: Ig heavy chain V region MOPC 47A (117 aa).

In terms of domain architecture, Ig-like spans 1 to 113; sequence EVKLVESGGG…FAYWGZGTLV (113 aa).

The polypeptide is Ig heavy chain V region MOPC 47A (Mus musculus (Mouse)).